Reading from the N-terminus, the 264-residue chain is Thymidylate synthase (264 aa).

Arginine 21 provides a ligand contact to dUMP. Histidine 51 provides a ligand contact to (6R)-5,10-methylene-5,6,7,8-tetrahydrofolate. Residue 126–127 (RR) participates in dUMP binding. Cysteine 146 serves as the catalytic Nucleophile. Residues 166-169 (RSAD), asparagine 177, and 207-209 (HLY) contribute to the dUMP site. Aspartate 169 lines the (6R)-5,10-methylene-5,6,7,8-tetrahydrofolate pocket. Serine 263 lines the (6R)-5,10-methylene-5,6,7,8-tetrahydrofolate pocket.

Belongs to the thymidylate synthase family. Bacterial-type ThyA subfamily. Homodimer.

The protein resides in the cytoplasm. The catalysed reaction is dUMP + (6R)-5,10-methylene-5,6,7,8-tetrahydrofolate = 7,8-dihydrofolate + dTMP. Its pathway is pyrimidine metabolism; dTTP biosynthesis. Its function is as follows. Catalyzes the reductive methylation of 2'-deoxyuridine-5'-monophosphate (dUMP) to 2'-deoxythymidine-5'-monophosphate (dTMP) while utilizing 5,10-methylenetetrahydrofolate (mTHF) as the methyl donor and reductant in the reaction, yielding dihydrofolate (DHF) as a by-product. This enzymatic reaction provides an intracellular de novo source of dTMP, an essential precursor for DNA biosynthesis. The polypeptide is Thymidylate synthase (Nitrosococcus oceani (strain ATCC 19707 / BCRC 17464 / JCM 30415 / NCIMB 11848 / C-107)).